Here is a 128-residue protein sequence, read N- to C-terminus: uncharacterized protein (128 aa).

The next 2 membrane-spanning stretches (helical) occupy residues 52–72 and 91–111; these read LLVI…GIFL and LFVA…VMLI.

It localises to the cell membrane. This is an uncharacterized protein from Mycoplasma pneumoniae (strain ATCC 29342 / M129 / Subtype 1) (Mycoplasmoides pneumoniae).